The chain runs to 359 residues: MENHQKTSFTFEIENFSERKYLIWSPIFISGQCHWFVKVYPIKDNNYDHVSVYLHVANPQSLRPGWKRRAHFSLILSNQSGKEVKIPSDSCDLFCTELSSSYPKILPPIKLKEEGFLENDKLIITVEVKVVEVVHPGELTGKEMVEFKELQDLYNGVQQNKEVVKNCELMNMDMKQDSLKSNHHEVSLKDKKRDDADESRFQKLEERLKNLELMELDCLKSKLEEVSIKNKKADADRSRVQRLEERLKNLELMDLDCLKSKLELVSIKNKKADADRSRIQRLEERVKKLELMELDDLKSKLEEVSLERKKSDDAYRSRVYQLEECFKNLELMVLDFKVELDKKKDKSCDDGFLLVDEFA.

An MATH domain is found at 6–128; that stretch reads KTSFTFEIEN…NDKLIITVEV (123 aa). A coiled-coil region spans residues 146-337; it reads EFKELQDLYN…NLELMVLDFK (192 aa).

This Arabidopsis thaliana (Mouse-ear cress) protein is MATH domain and coiled-coil domain-containing protein At2g42475.